The primary structure comprises 494 residues: Cobyric acid synthase (494 aa).

The 197-residue stretch at 248 to 444 (EIEIAIIKLP…LHGIFENDEW (197 aa)) folds into the GATase cobBQ-type domain. Catalysis depends on cysteine 329, which acts as the Nucleophile. Residue histidine 436 is part of the active site.

The protein belongs to the CobB/CobQ family. CobQ subfamily.

It participates in cofactor biosynthesis; adenosylcobalamin biosynthesis. Catalyzes amidations at positions B, D, E, and G on adenosylcobyrinic A,C-diamide. NH(2) groups are provided by glutamine, and one molecule of ATP is hydrogenolyzed for each amidation. The chain is Cobyric acid synthase from Prochlorococcus marinus (strain NATL1A).